We begin with the raw amino-acid sequence, 236 residues long: Adenylate dimethylallyltransferase (236 aa).

This sequence belongs to the isopentenyl transferase family.

It catalyses the reaction dimethylallyl diphosphate + AMP = N(6)-(dimethylallyl)adenosine 5'-phosphate + diphosphate. Its function is as follows. Transfers dimethylallyl groups to AMP as part of the biosynthesis of cytokinin phytohormones. The chain is Adenylate dimethylallyltransferase (ipt) from Pantoea agglomerans pv. gypsophilae (Erwinia herbicola).